A 762-amino-acid polypeptide reads, in one-letter code: Hyperosmolality-gated Ca2+ permeable channel 2.2 (762 aa).

The next 10 membrane-spanning stretches (helical) occupy residues 3-23 (VSAL…LVSL), 90-110 (MVIC…AFVL), 144-164 (LWVH…LLYF), 354-374 (IATL…VTFV), 402-422 (VITG…VPPL), 445-465 (KILY…GSVI), 500-520 (GWAG…NLIA), 557-577 (VIAP…YLIY), 594-614 (QYWP…QVIA), and 615-635 (LGFF…PLIL).

The protein belongs to the CSC1 (TC 1.A.17) family.

Its subcellular location is the membrane. Its function is as follows. Acts as an osmosensitive calcium-permeable cation channel. This chain is Hyperosmolality-gated Ca2+ permeable channel 2.2, found in Arabidopsis thaliana (Mouse-ear cress).